The chain runs to 878 residues: Phosphoenolpyruvate carboxylase (878 aa).

Active-site residues include His140 and Lys545.

Belongs to the PEPCase type 1 family. It depends on Mg(2+) as a cofactor.

The enzyme catalyses oxaloacetate + phosphate = phosphoenolpyruvate + hydrogencarbonate. Forms oxaloacetate, a four-carbon dicarboxylic acid source for the tricarboxylic acid cycle. The sequence is that of Phosphoenolpyruvate carboxylase from Ectopseudomonas mendocina (strain ymp) (Pseudomonas mendocina).